The chain runs to 526 residues: MSKAPLALLSVSDKSNIVEFAQGLIQAGFGLLSTGGTFRLLTEHNVAVTEVSDYTGFPEMMDGRVKTLHPKIHGGILGRRGTDDMVMSEHAIERIDLVVVNLYPFAETIARSDVTMNDAIENIDIGGPTMVRSAAKNHAHVGIVTDPADYTRVLEALGDSTALTATLRYDLAVKAFEHTAQYDGMIANFLGSRVNESQEPESFSRTFNVQLEKVQDLRYGENPHQKAAFYVENNSSKSKQASIATAKQLQGKALSYNNIADTDAALECVKAFSTPACVIVKHANPCGVAVDIDQVAAYRTAFSTDPESSFGGIIAFNRPLTLAAATAIIDNQFVEVIIAPSVEDGVLEATASKKNVRVLVCGDLPAPELRDRQLDYKRVNGGLLVQEQDLGLITAHDLKIVTDVQPTEAQIADLLFSWNVAKYVKSNAIVYAKGQRTIGVGAGQMSRVNSARIAAIKAEHAGLATEGAVMASDAFFPFRDGIDNAAEVGIAAIIQPGGSMRDDETIAAANEHGIAMVFTGMRHFRH.

The MGS-like domain maps to 1–145 (MSKAPLALLS…KNHAHVGIVT (145 aa)).

It belongs to the PurH family.

The enzyme catalyses (6R)-10-formyltetrahydrofolate + 5-amino-1-(5-phospho-beta-D-ribosyl)imidazole-4-carboxamide = 5-formamido-1-(5-phospho-D-ribosyl)imidazole-4-carboxamide + (6S)-5,6,7,8-tetrahydrofolate. It catalyses the reaction IMP + H2O = 5-formamido-1-(5-phospho-D-ribosyl)imidazole-4-carboxamide. The protein operates within purine metabolism; IMP biosynthesis via de novo pathway; 5-formamido-1-(5-phospho-D-ribosyl)imidazole-4-carboxamide from 5-amino-1-(5-phospho-D-ribosyl)imidazole-4-carboxamide (10-formyl THF route): step 1/1. Its pathway is purine metabolism; IMP biosynthesis via de novo pathway; IMP from 5-formamido-1-(5-phospho-D-ribosyl)imidazole-4-carboxamide: step 1/1. The sequence is that of Bifunctional purine biosynthesis protein PurH from Psychrobacter arcticus (strain DSM 17307 / VKM B-2377 / 273-4).